The sequence spans 340 residues: DNA-directed RNA polymerase subunit alpha (340 aa).

Positions 1-226 are alpha N-terminal domain (alpha-NTD); the sequence is MLIAQRPSLT…ELFGLARELN (226 aa). Residues 243–340 are alpha C-terminal domain (alpha-CTD); the sequence is LAADLALPIE…DAGFVETEQY (98 aa).

Belongs to the RNA polymerase alpha chain family. In terms of assembly, homodimer. The RNAP catalytic core consists of 2 alpha, 1 beta, 1 beta' and 1 omega subunit. When a sigma factor is associated with the core the holoenzyme is formed, which can initiate transcription. Post-translationally, the last 19 amino acids in the C-terminal part are cleaved in the spore.

It carries out the reaction RNA(n) + a ribonucleoside 5'-triphosphate = RNA(n+1) + diphosphate. Its function is as follows. DNA-dependent RNA polymerase catalyzes the transcription of DNA into RNA using the four ribonucleoside triphosphates as substrates. The protein is DNA-directed RNA polymerase subunit alpha of Streptomyces granaticolor.